Here is a 346-residue protein sequence, read N- to C-terminus: Bifunctional phosphatase IMPL2, chloroplastic (346 aa).

A chloroplast-targeting transit peptide spans 1 to 61 (MLAQSHFFSK…VSRRRFCLTM (61 aa)). Mg(2+) is bound by residues glutamate 147, aspartate 165, and aspartate 168. Glutamate 147 provides a ligand contact to substrate. Substrate contacts are provided by residues 167-170 (IDGT), 263-265 (GCD), glutamate 282, and aspartate 289. Position 289 (aspartate 289) interacts with Mg(2+).

Belongs to the inositol monophosphatase superfamily. Mg(2+) serves as cofactor. As to expression, ubiquitous. High expression in roots. Expressed in pistil and seed endosperm.

It is found in the plastid. Its subcellular location is the chloroplast. It carries out the reaction a myo-inositol phosphate + H2O = myo-inositol + phosphate. The enzyme catalyses L-histidinol phosphate + H2O = L-histidinol + phosphate. The catalysed reaction is beta-L-galactose 1-phosphate + H2O = L-galactose + phosphate. It participates in amino-acid biosynthesis; L-histidine biosynthesis; L-histidine from 5-phospho-alpha-D-ribose 1-diphosphate: step 8/9. Its pathway is polyol metabolism; myo-inositol biosynthesis; myo-inositol from D-glucose 6-phosphate: step 2/2. Its function is as follows. Phosphatase required for histidine production. Also acts on L-galactose 1-phosphate (L-Gal 1-P), D-myoinositol 3-phosphate (D-Ins 3-P) and D-myoinositol 1-phosphate (D-Ins 1-P). The sequence is that of Bifunctional phosphatase IMPL2, chloroplastic (HISN7) from Arabidopsis thaliana (Mouse-ear cress).